Consider the following 415-residue polypeptide: Histone acetyltransferase type B subunit 2 (415 aa).

WD repeat units follow at residues 118-158 (ENNF…KTAI), 163-203 (PHED…ATDL), 211-251 (THKD…EPVS), 256-296 (PESE…TKSA), and 307-347 (GHSD…EEQA). The interaction with the histone H4 N-terminus stretch occupies residues 349-353 (EDAED). Residues 364–404 (GHTGAVTDLSWCPYKDWTIGSVADDNIVHLWEIGKTLLNAE) form a WD 6 repeat.

It belongs to the WD repeat RBAP46/RBAP48/MSI1 family. As to quaternary structure, component of the HAT-B complex composed of at least HAT1 and HAT2. The HAT-B complex binds to histone H4 tail.

It is found in the cytoplasm. Its subcellular location is the nucleus. Functionally, regulatory subunit of the histone acetylase B (HAT-B) complex. The complex acetylates 'Lys-12' of histone H4 which is required for telomeric silencing. The chain is Histone acetyltransferase type B subunit 2 (HAT2) from Debaryomyces hansenii (strain ATCC 36239 / CBS 767 / BCRC 21394 / JCM 1990 / NBRC 0083 / IGC 2968) (Yeast).